A 442-amino-acid chain; its full sequence is uncharacterized protein (442 aa).

Positions 1–238 (MKAEGLSGGY…QSIKAVYDTD (238 aa)) constitute an ABC transporter domain. Residue 33–40 (GPNGSGKT) participates in ATP binding.

Belongs to the ABC transporter superfamily. As to quaternary structure, the complex is composed of two ATP-binding proteins (YvrA), two transmembrane proteins (YvrB) and a solute-binding protein (YvrC).

In terms of biological role, probably part of an ABC transporter complex. Probably responsible for energy coupling to the transport system. This is an uncharacterized protein from Bacillus subtilis (strain 168).